Reading from the N-terminus, the 267-residue chain is Staphylococcal secretory antigen ssaA2 (267 aa).

The signal sequence occupies residues 1-27 (MKKIATATIATAGFATIAIASGNQAHA). Repeat copies occupy residues 83-85 (YNN), 86-88 (YNN), 89-91 (YNN), 95-97 (YNN), 101-103 (YNN), 104-106 (YSN), and 113-115 (YNN). The tract at residues 83–115 (YNNYNNYNNGYSYNNYSRYNNYSNNNQSYNYNN) is 7 X 3 AA repeats of Y-[NS]-N. In terms of domain architecture, Peptidase C51 spans 146 to 267 (MAPSSNGRSI…SQAAGYNFIH (122 aa)).

The protein resides in the secreted. Its function is as follows. Not known; immunogenic protein. The sequence is that of Staphylococcal secretory antigen ssaA2 (ssaA2) from Staphylococcus aureus (strain NCTC 8325 / PS 47).